The primary structure comprises 288 residues: Bifunctional protein FolD (288 aa).

Residues 166 to 168 (GRS), Ser-191, and Ile-232 contribute to the NADP(+) site.

The protein belongs to the tetrahydrofolate dehydrogenase/cyclohydrolase family. In terms of assembly, homodimer.

The catalysed reaction is (6R)-5,10-methylene-5,6,7,8-tetrahydrofolate + NADP(+) = (6R)-5,10-methenyltetrahydrofolate + NADPH. It catalyses the reaction (6R)-5,10-methenyltetrahydrofolate + H2O = (6R)-10-formyltetrahydrofolate + H(+). It functions in the pathway one-carbon metabolism; tetrahydrofolate interconversion. In terms of biological role, catalyzes the oxidation of 5,10-methylenetetrahydrofolate to 5,10-methenyltetrahydrofolate and then the hydrolysis of 5,10-methenyltetrahydrofolate to 10-formyltetrahydrofolate. The sequence is that of Bifunctional protein FolD from Rickettsia massiliae (strain Mtu5).